Consider the following 411-residue polypeptide: LL-diaminopimelate aminotransferase (411 aa).

Residues tyrosine 15 and glycine 42 each coordinate substrate. Pyridoxal 5'-phosphate-binding positions include tyrosine 72, 108-109 (SK), tyrosine 132, asparagine 187, tyrosine 218, and 246-248 (SFS). Positions 109, 132, and 187 each coordinate substrate. Lysine 249 bears the N6-(pyridoxal phosphate)lysine mark. Residues arginine 257 and asparagine 292 each contribute to the pyridoxal 5'-phosphate site. 2 residues coordinate substrate: asparagine 292 and arginine 388.

The protein belongs to the class-I pyridoxal-phosphate-dependent aminotransferase family. LL-diaminopimelate aminotransferase subfamily. As to quaternary structure, homodimer. The cofactor is pyridoxal 5'-phosphate.

The enzyme catalyses (2S,6S)-2,6-diaminopimelate + 2-oxoglutarate = (S)-2,3,4,5-tetrahydrodipicolinate + L-glutamate + H2O + H(+). Its pathway is amino-acid biosynthesis; L-lysine biosynthesis via DAP pathway; LL-2,6-diaminopimelate from (S)-tetrahydrodipicolinate (aminotransferase route): step 1/1. Functionally, involved in the synthesis of meso-diaminopimelate (m-DAP or DL-DAP), required for both lysine and peptidoglycan biosynthesis. Catalyzes the direct conversion of tetrahydrodipicolinate to LL-diaminopimelate. This Cyanothece sp. (strain PCC 7425 / ATCC 29141) protein is LL-diaminopimelate aminotransferase.